Here is a 271-residue protein sequence, read N- to C-terminus: Formamidopyrimidine-DNA glycosylase (271 aa).

Catalysis depends on Pro2, which acts as the Schiff-base intermediate with DNA. Glu3 functions as the Proton donor in the catalytic mechanism. Lys58 (proton donor; for beta-elimination activity) is an active-site residue. DNA is bound by residues His92, Arg111, and Arg152. The FPG-type zinc finger occupies 237–271 (MVYGREGQACKHCGRELKHATIGQRATVWCAACQR). The active-site Proton donor; for delta-elimination activity is the Arg261.

It belongs to the FPG family. As to quaternary structure, monomer. It depends on Zn(2+) as a cofactor.

It catalyses the reaction Hydrolysis of DNA containing ring-opened 7-methylguanine residues, releasing 2,6-diamino-4-hydroxy-5-(N-methyl)formamidopyrimidine.. It carries out the reaction 2'-deoxyribonucleotide-(2'-deoxyribose 5'-phosphate)-2'-deoxyribonucleotide-DNA = a 3'-end 2'-deoxyribonucleotide-(2,3-dehydro-2,3-deoxyribose 5'-phosphate)-DNA + a 5'-end 5'-phospho-2'-deoxyribonucleoside-DNA + H(+). Its function is as follows. Involved in base excision repair of DNA damaged by oxidation or by mutagenic agents. Acts as a DNA glycosylase that recognizes and removes damaged bases. Has a preference for oxidized purines, such as 7,8-dihydro-8-oxoguanine (8-oxoG). Has AP (apurinic/apyrimidinic) lyase activity and introduces nicks in the DNA strand. Cleaves the DNA backbone by beta-delta elimination to generate a single-strand break at the site of the removed base with both 3'- and 5'-phosphates. The protein is Formamidopyrimidine-DNA glycosylase of Xanthomonas campestris pv. campestris (strain B100).